Consider the following 244-residue polypeptide: Eukaryotic translation initiation factor 6 (244 aa).

A phosphoserine; by CK1 mark is found at Ser174 and Ser175.

This sequence belongs to the eIF-6 family. As to quaternary structure, monomer. Associates with the 60S ribosomal subunit. Phosphorylation at Ser-174 and Ser-175 promotes nuclear export.

It is found in the cytoplasm. Its subcellular location is the nucleus. It localises to the nucleolus. Its function is as follows. Binds to the 60S ribosomal subunit and prevents its association with the 40S ribosomal subunit to form the 80S initiation complex in the cytoplasm. Is also involved in ribosome biogenesis. Associates with pre-60S subunits in the nucleus and is involved in its nuclear export. The protein is Eukaryotic translation initiation factor 6 (tif6) of Schizosaccharomyces pombe (strain 972 / ATCC 24843) (Fission yeast).